A 536-amino-acid polypeptide reads, in one-letter code: Vacuolar segregation protein pep7 (536 aa).

Residues 1-31 form a disordered region; that stretch reads MQNGKRRIGVRISSNLSNHSGTNLSTSAQSD. Over residues 12-31 the composition is skewed to polar residues; the sequence is ISSNLSNHSGTNLSTSAQSD. A C2H2-type zinc finger spans residues 39–62; the sequence is TECPICGLELPNLSALNDHLDVTH. An FYVE-type 1; degenerate zinc finger spans residues 136-201; sequence PDMVCHDPMC…VCRECYEGRP (66 aa). Zn(2+) is bound by residues Cys158, Cys161, Cys193, Cys196, Cys281, Cys284, Cys297, Cys300, Cys305, Cys308, Cys324, and Cys327. Residues 275-332 form an FYVE-type 2 zinc finger; it reads DSVVQICPECNNSFTLTRRRRHCRLCGRVICRFCVLEISLPQHPQPLLICMSCNQNYF.

Required for vacuole segregation and vacuole protein sorting. Possibly part of a complex which tethers the vacuole membrane to microtubules, either directly or via kinesin or dynein-like motor proteins. Probably functions in several interorganelle traffic pathways. This chain is Vacuolar segregation protein pep7 (pep7), found in Schizosaccharomyces pombe (strain 972 / ATCC 24843) (Fission yeast).